Here is a 152-residue protein sequence, read N- to C-terminus: Small ribosomal subunit protein uS13 (152 aa).

The protein belongs to the universal ribosomal protein uS13 family. As to quaternary structure, component of the small ribosomal subunit.

The protein resides in the cytoplasm. Component of the small ribosomal subunit. The ribosome is a large ribonucleoprotein complex responsible for the synthesis of proteins in the cell. Plays an essential role in early embryonic development. In Danio rerio (Zebrafish), this protein is Small ribosomal subunit protein uS13 (rps18).